A 146-amino-acid chain; its full sequence is MAGKEIQTPDQAEAFVAKVFDVLDSYDYTRFGEVLSTDLKYEGGLQKTSGLDNFINDIKASTQRMPGLQTSHSRYRTELTAEGTIYSEGHSNASLESNPGKVVTVPMIGVFKLDSEDGKIKEMRIYKDRLPFLALHQALPGMKANN.

The protein operates within antibiotic biosynthesis. In terms of biological role, part of the gene cluster that mediates the biosynthesis of sordarin and hypoxysordarin, glycoside antibiotics with a unique tetracyclic diterpene aglycone structure. First, the geranylgeranyl diphosphate synthase sdnC constructs GGDP from farnesyl diphosphate and isopentenyl diphosphate. The diterpene cyclase sdnA then catalyzes the cyclization of GGDP to afford cycloaraneosene. Cycloaraneosene is then hydroxylated four times by the putative cytochrome P450 monooxygenases sdnB, sdnE, sdnF and sdnH to give a hydroxylated cycloaraneosene derivative such as cycloaraneosene-8,9,13,19-tetraol. Although the order of the hydroxylations is unclear, at least C8, C9 and C13 of the cycloaraneosene skeleton are hydroxylated before the sordaricin formation. Dehydration of the 13-hydroxy group of the hydroxylated cycloaraneosene derivative might be catalyzed by an unassigned hypothetical protein such as sdnG and sdnP to construct the cyclopentadiene moiety. The FAD-dependent oxidoreductase sdnN is proposed to catalyze the oxidation at C9 of the hydroxylated cycloaraneosene derivative and also catalyze the Baeyer-Villiger oxidation to give the lactone intermediate. The presumed lactone intermediate would be hydrolyzed to give an acrolein moiety and a carboxylate moiety. Then, [4+2]cycloaddition would occur between the acrolein moiety and the cyclopentadiene moiety to give sordaricin. SdnN might also be involved in the [4+2]cycloaddition after the hypothesized oxidation to accommodate the oxidized product and prompt the [4+2]cycloaddition. GDP-6-deoxy-D-altrose may be biosynthesized from GDP-D-mannose by the putative GDP-mannose-4,6-dehydratase sdnI and the short-chain dehydrogenase sdnK. The glycosyltransferase sdnJ catalyzes the attachment of 6-deoxy-D-altrose onto the 19-hydroxy group of sordaricin to give 4'-O-demethylsordarin. The methyltransferase sdnD would complete the biosynthesis of sordarin. Sordarin can be further modified into hypoxysordarin. The unique acyl chain at the 3'-hydroxy group of hypoxysordarin would be constructed by an iterative type I PKS sdnO and the trans-acting polyketide methyltransferase sdnL. SdnL would be responsible for the introduction of an alpha-methyl group of the polyketide chain. Alternatively, the beta-lactamase-like protein sdnR might be responsible for the cleavage and transfer of the polyketide chain from the PKS sdnO to sordarin. Two putative cytochrome P450 monooxygenases, sdnQ and sdnT, might catalyze the epoxidations of the polyketide chain to complete the biosynthesis of hypoxysordarin. Transcriptional regulators sdnM and sdnS are presumably encoded for the transcriptional regulation of the expression of the sdn gene cluster. This is Sordarin/hypoxysordarin biosynthesis cluster protein G from Sordaria araneosa (Pleurage araneosa).